The chain runs to 69 residues: Cold shock-like protein CspC (69 aa).

Residues 6 to 66 (GQVKWFNESK…GQKGPAAVNV (61 aa)) enclose the CSD domain.

It localises to the cytoplasm. In Buchnera aphidicola subsp. Acyrthosiphon pisum (strain APS) (Acyrthosiphon pisum symbiotic bacterium), this protein is Cold shock-like protein CspC (cspC).